Here is a 432-residue protein sequence, read N- to C-terminus: Adenylosuccinate synthetase (432 aa).

Residues 11–17 and 39–41 contribute to the GTP site; these read GDEGKGK and GHT. Catalysis depends on Asp-12, which acts as the Proton acceptor. The Mg(2+) site is built by Asp-12 and Gly-39. Residues 12–15, 37–40, Thr-134, Arg-148, Asn-230, Thr-245, and Arg-309 each bind IMP; these read DEGK and NAGH. His-40 functions as the Proton donor in the catalytic mechanism. Residue 305-311 participates in substrate binding; that stretch reads VTTGRKR. GTP is bound by residues Arg-311, 337–339, and 419–421; these read KLD and GTG.

This sequence belongs to the adenylosuccinate synthetase family. In terms of assembly, homodimer. Requires Mg(2+) as cofactor.

It localises to the cytoplasm. It carries out the reaction IMP + L-aspartate + GTP = N(6)-(1,2-dicarboxyethyl)-AMP + GDP + phosphate + 2 H(+). Its pathway is purine metabolism; AMP biosynthesis via de novo pathway; AMP from IMP: step 1/2. Its function is as follows. Plays an important role in the de novo pathway and in the salvage pathway of purine nucleotide biosynthesis. Catalyzes the first committed step in the biosynthesis of AMP from IMP. In Candida glabrata (strain ATCC 2001 / BCRC 20586 / JCM 3761 / NBRC 0622 / NRRL Y-65 / CBS 138) (Yeast), this protein is Adenylosuccinate synthetase.